The following is a 125-amino-acid chain: Small ribosomal subunit protein uS13 (125 aa).

The interval 97–125 is disordered; it reads PVRGQKTRSNARTRKGPRPSRIKTKKKSS. Positions 101–125 are enriched in basic residues; sequence QKTRSNARTRKGPRPSRIKTKKKSS.

It belongs to the universal ribosomal protein uS13 family. Part of the 30S ribosomal subunit. Forms a loose heterodimer with protein S19. Forms two bridges to the 50S subunit in the 70S ribosome.

Functionally, located at the top of the head of the 30S subunit, it contacts several helices of the 16S rRNA. In the 70S ribosome it contacts the 23S rRNA (bridge B1a) and protein L5 of the 50S subunit (bridge B1b), connecting the 2 subunits; these bridges are implicated in subunit movement. Contacts the tRNAs in the A and P-sites. This is Small ribosomal subunit protein uS13 from Thermotoga neapolitana (strain ATCC 49049 / DSM 4359 / NBRC 107923 / NS-E).